The sequence spans 545 residues: Chaperonin GroEL 2 (545 aa).

Residues 29 to 32 (TLGP), 86 to 90 (DGTTT), Gly413, 479 to 481 (NAA), and Asp495 each bind ATP.

Belongs to the chaperonin (HSP60) family. As to quaternary structure, forms a cylinder of 14 subunits composed of two heptameric rings stacked back-to-back. Interacts with the co-chaperonin GroES.

Its subcellular location is the cytoplasm. It catalyses the reaction ATP + H2O + a folded polypeptide = ADP + phosphate + an unfolded polypeptide.. Functionally, together with its co-chaperonin GroES, plays an essential role in assisting protein folding. The GroEL-GroES system forms a nano-cage that allows encapsulation of the non-native substrate proteins and provides a physical environment optimized to promote and accelerate protein folding. This Prochlorococcus marinus (strain MIT 9301) protein is Chaperonin GroEL 2.